An 892-amino-acid polypeptide reads, in one-letter code: DNA mismatch repair protein MutS (892 aa).

607-614 (GPNMSGKS) lines the ATP pocket. The tract at residues 833–854 (EESQLSFFGGEQSPKKQDKPVL) is disordered. Residues 845–854 (SPKKQDKPVL) show a composition bias toward basic and acidic residues.

It belongs to the DNA mismatch repair MutS family.

Functionally, this protein is involved in the repair of mismatches in DNA. It is possible that it carries out the mismatch recognition step. This protein has a weak ATPase activity. This is DNA mismatch repair protein MutS from Bacillus cereus (strain Q1).